The following is a 98-amino-acid chain: DNA-binding protein Fis (98 aa).

A DNA-binding region (H-T-H motif) is located at residues 74-93 (QTKAANMMGINRGTLRKKLK).

The protein belongs to the transcriptional regulatory Fis family. As to quaternary structure, homodimer.

In terms of biological role, activates ribosomal RNA transcription. Plays a direct role in upstream activation of rRNA promoters. The chain is DNA-binding protein Fis from Aliivibrio fischeri (strain ATCC 700601 / ES114) (Vibrio fischeri).